Reading from the N-terminus, the 492-residue chain is Aerolysin-4 (492 aa).

An N-terminal signal peptide occupies residues 1-23 (MKKLKITGLSLIISGLLMAQAQA). 2 cysteine pairs are disulfide-bonded: cysteine 42-cysteine 98 and cysteine 182-cysteine 187. The segment at 68–84 (WQISGLANGWVIMGPGY) is interaction with host N-linked glycan. A part of the transmembrane beta-barrel after proteolytic activation of the toxin and insertion into the host membrane region spans residues 256–288 (YGLSEKVTTKNKFKWPLVGETELSIEIAANQSW). An interaction with glycans from host GPI-anchor region spans residues 346 to 355 (RWGGNAWYTH). Residues 446–492 (AAASHSSRARNLSAGQGLRLEIPLDAQELSGLGFNNVSLSVTPAANQ) constitute a propeptide that is removed on maturation.

It belongs to the aerolysin family. As to quaternary structure, homodimer in solution; homoheptamer in the host membrane. After binding to GPI-anchored proteins in target membranes and proteolytic removal of the C-terminal propeptide, the protein assembles into a heptameric pre-pore complex. A further conformation change leads to insertion into the host membrane. Post-translationally, proteolytic cleavage and subsequent release of the propeptide trigger a major conformation change, leading to the formation of a heptameric pre-pore that then inserts into the host membrane.

The protein localises to the secreted. The protein resides in the host cell membrane. Its function is as follows. Secreted, cytolytic toxin that forms pores in host membranes after proteolytic removal of a C-terminal propeptide, leading to destruction of the membrane permeability barrier and cell death. The pores are formed by transmembrane beta-strands and are approximately 3 nm in diameter. The sequence is that of Aerolysin-4 (ahh4) from Aeromonas hydrophila.